A 480-amino-acid chain; its full sequence is Ribulose bisphosphate carboxylase large chain (480 aa).

Residues 1-2 (MS) constitute a propeptide that is removed on maturation. An N-acetylproline modification is found at Pro-3. Lys-14 is modified (N6,N6,N6-trimethyllysine). Substrate-binding residues include Asn-123 and Thr-173. Lys-175 acts as the Proton acceptor in catalysis. Residue Lys-177 coordinates substrate. Positions 201, 203, and 204 each coordinate Mg(2+). N6-carboxylysine is present on Lys-201. His-294 acts as the Proton acceptor in catalysis. Substrate is bound by residues Arg-295, His-327, and Ser-379.

This sequence belongs to the RuBisCO large chain family. Type I subfamily. As to quaternary structure, heterohexadecamer of 8 large chains and 8 small chains; disulfide-linked. The disulfide link is formed within the large subunit homodimers. It depends on Mg(2+) as a cofactor. In terms of processing, the disulfide bond which can form in the large chain dimeric partners within the hexadecamer appears to be associated with oxidative stress and protein turnover.

The protein localises to the plastid. The protein resides in the chloroplast. It carries out the reaction 2 (2R)-3-phosphoglycerate + 2 H(+) = D-ribulose 1,5-bisphosphate + CO2 + H2O. The enzyme catalyses D-ribulose 1,5-bisphosphate + O2 = 2-phosphoglycolate + (2R)-3-phosphoglycerate + 2 H(+). RuBisCO catalyzes two reactions: the carboxylation of D-ribulose 1,5-bisphosphate, the primary event in carbon dioxide fixation, as well as the oxidative fragmentation of the pentose substrate in the photorespiration process. Both reactions occur simultaneously and in competition at the same active site. In Acorus calamus var. americanus (American sweet flag), this protein is Ribulose bisphosphate carboxylase large chain.